Reading from the N-terminus, the 256-residue chain is Bialaphos biosynthetic pathway regulatory protein (256 aa).

The region spanning 184–249 (ETADAIDVSD…QLGARAAECR (66 aa)) is the HTH luxR-type domain. Positions 208-227 (DVAMARSLGISTRTLRRVIT) form a DNA-binding region, H-T-H motif.

Its function is as follows. Involved in the regulation of the biosynthesis of phosphinothricin tripeptide (PTT), also known as bialaphos (BA), a natural-product antibiotic and potent herbicide. The chain is Bialaphos biosynthetic pathway regulatory protein (brpA) from Streptomyces hygroscopicus.